The primary structure comprises 423 residues: Glycine amidinotransferase, mitochondrial (423 aa).

The transit peptide at 1-43 (MLRVRCLRGGSRGAEAVHYIGSRLGRTLTGWVQRTFQSTQAAT) directs the protein to the mitochondrion. Phosphoserine occurs at positions 46 and 49. D170 is a binding site for arginine. Residues D254 and H303 contribute to the active site. Residues D305, R322, S354, and S355 each contribute to the arginine site. Position 385 is an N6-acetyllysine (K385). The active-site Amidino-cysteine intermediate is the C407.

The protein belongs to the amidinotransferase family. Homodimer. There is an equilibrium between the monomeric and dimeric forms, shifted towards the side of the monomer. Expressed in brain, heart, kidney, liver, lung, salivary gland and skeletal muscle tissue, with the highest expression in kidney. Biallelically expressed in placenta and fetal tissues.

Its subcellular location is the mitochondrion inner membrane. It is found in the cytoplasm. It catalyses the reaction L-arginine + glycine = guanidinoacetate + L-ornithine. It carries out the reaction 4-aminobutanoate + L-arginine = 4-guanidinobutanoate + L-ornithine. The enzyme catalyses beta-alanine + L-arginine = 3-guanidinopropanoate + L-ornithine. The catalysed reaction is taurine + L-arginine = taurocyamine + L-ornithine. It functions in the pathway amine and polyamine biosynthesis; creatine biosynthesis; creatine from L-arginine and glycine: step 1/2. Transamidinase that catalyzes the transfer of the amidino group of L-arginine onto the amino moiety of acceptor metabolites such as glycine, beta-alanine, gamma-aminobutyric acid (GABA) and taurine yielding the corresponding guanidine derivatives. Catalyzes the rate-limiting step of creatine biosynthesis, namely the transfer of the amidino group from L-arginine to glycine to generate guanidinoacetate, which is then methylated by GAMT to form creatine. Provides creatine as a source for ATP generation in tissues with high energy demands, in particular skeletal muscle, heart and brain. This chain is Glycine amidinotransferase, mitochondrial (GATM), found in Homo sapiens (Human).